Consider the following 503-residue polypeptide: Nuclear respiratory factor 1 (503 aa).

The interval 1 to 78 is dimerization; that stretch reads MEEHGVTQTE…AHLAAAGPVG (78 aa). The interval 36 to 57 is disordered; that stretch reads SMLSADEDSPSSPEDTSYDDSD. Phosphoserine; by CK2 is present on residues Ser-39, Ser-44, Ser-46, Ser-47, and Ser-52. The Nuclear localization signal signature appears at 88–116; the sequence is GKKRKRPHVFESNPSIRKRQQTRLLRKLR. A DNA-binding region spans residues 109–305; it reads TRLLRKLRAT…SIAHLVPSQT (197 aa). Lys-139 participates in a covalent cross-link: Glycyl lysine isopeptide (Lys-Gly) (interchain with G-Cter in SUMO2). A required for transcriptional activation region spans residues 301-476; the sequence is VPSQTVVQTF…AQGNGPVQVA (176 aa).

Belongs to the NRF1/Ewg family. As to quaternary structure, homodimer. Binds DNA as a dimer. Interacts with PPRC1. In terms of processing, phosphorylation enhances DNA binding. In terms of tissue distribution, widely expressed in embryonic, fetal, and adult tissues.

It is found in the nucleus. Its function is as follows. Transcription factor that activates the expression of the EIF2S1 (EIF2-alpha) gene. Links the transcriptional modulation of key metabolic genes to cellular growth and development. Implicated in the control of nuclear genes required for respiration, heme biosynthesis, and mitochondrial DNA transcription and replication. This is Nuclear respiratory factor 1 (Nrf1) from Mus musculus (Mouse).